We begin with the raw amino-acid sequence, 102 residues long: Co-chaperonin GroES (102 aa).

Belongs to the GroES chaperonin family. In terms of assembly, heptamer of 7 subunits arranged in a ring. Interacts with the chaperonin GroEL.

The protein localises to the cytoplasm. Functionally, together with the chaperonin GroEL, plays an essential role in assisting protein folding. The GroEL-GroES system forms a nano-cage that allows encapsulation of the non-native substrate proteins and provides a physical environment optimized to promote and accelerate protein folding. GroES binds to the apical surface of the GroEL ring, thereby capping the opening of the GroEL channel. The sequence is that of Co-chaperonin GroES from Streptomyces albus G.